A 387-amino-acid polypeptide reads, in one-letter code: 3-ketoacyl-CoA thiolase (387 aa).

Cys-91 acts as the Acyl-thioester intermediate in catalysis. Residues His-343 and Cys-373 each act as proton acceptor in the active site.

The protein belongs to the thiolase-like superfamily. Thiolase family. In terms of assembly, heterotetramer of two alpha chains (FadB) and two beta chains (FadA).

The protein resides in the cytoplasm. The enzyme catalyses an acyl-CoA + acetyl-CoA = a 3-oxoacyl-CoA + CoA. It participates in lipid metabolism; fatty acid beta-oxidation. Catalyzes the final step of fatty acid oxidation in which acetyl-CoA is released and the CoA ester of a fatty acid two carbons shorter is formed. The sequence is that of 3-ketoacyl-CoA thiolase from Cronobacter sakazakii (strain ATCC BAA-894) (Enterobacter sakazakii).